Reading from the N-terminus, the 283-residue chain is Biotin synthase (283 aa).

One can recognise a Radical SAM core domain in the interval 3–232 (KISNEIFLCS…NTRLMIAGGR (230 aa)). Positions 21, 25, and 28 each coordinate [4Fe-4S] cluster. [2Fe-2S] cluster contacts are provided by C65, C100, and R225.

It belongs to the radical SAM superfamily. Biotin synthase family. Homodimer. The cofactor is [4Fe-4S] cluster. [2Fe-2S] cluster is required as a cofactor.

The catalysed reaction is (4R,5S)-dethiobiotin + (sulfur carrier)-SH + 2 reduced [2Fe-2S]-[ferredoxin] + 2 S-adenosyl-L-methionine = (sulfur carrier)-H + biotin + 2 5'-deoxyadenosine + 2 L-methionine + 2 oxidized [2Fe-2S]-[ferredoxin]. Its pathway is cofactor biosynthesis; biotin biosynthesis; biotin from 7,8-diaminononanoate: step 2/2. Functionally, catalyzes the conversion of dethiobiotin (DTB) to biotin by the insertion of a sulfur atom into dethiobiotin via a radical-based mechanism. The protein is Biotin synthase of Helicobacter hepaticus (strain ATCC 51449 / 3B1).